The chain runs to 397 residues: MGNKKIVLAYSGGLDTSVAVKWLTDKGFDVIAACMDVGEGKDLNFIHDKALQVGAVESVVLNCKAEFAEIFVGAALKGNLMYENKYPLVSALSRPLIAKKLVEVAKEKGATAIAHGCTGKGNDQVRFEVAIHSLAPELEVIAPVREWHWAREEEIEYANQNGVPIPADLDNPYSIDMNLWGRAIEAGVLENPWNTCPEDAFFMINSVEDAPNEPEFIEVEFKEGLPIALNGKIMELHEIIKEVNIIAGKHGVGRIDHIENRLVGIKSREFYECPAAITLLKAHKDLEDLTFVRELAHFKPVLENELANLIYNGLWFNPATKALIAYLDETQKVVNGIVRIKLYKGLATPIGRKSTNSLYSEKLATYTAADEFDQAAAVGFIKLWGLPTQVNAQVNLK.

9–17 serves as a coordination point for ATP; the sequence is AYSGGLDTS. Tyr-86 lines the L-citrulline pocket. An ATP-binding site is contributed by Gly-116. The L-aspartate site is built by Thr-118, Asn-122, and Asp-123. Residue Asn-122 participates in L-citrulline binding. Residues Arg-126, Ser-174, Glu-259, and Tyr-271 each coordinate L-citrulline.

The protein belongs to the argininosuccinate synthase family. Type 1 subfamily. Homotetramer.

The protein resides in the cytoplasm. The catalysed reaction is L-citrulline + L-aspartate + ATP = 2-(N(omega)-L-arginino)succinate + AMP + diphosphate + H(+). It functions in the pathway amino-acid biosynthesis; L-arginine biosynthesis; L-arginine from L-ornithine and carbamoyl phosphate: step 2/3. The sequence is that of Argininosuccinate synthase from Lactococcus lactis subsp. cremoris (strain SK11).